Consider the following 300-residue polypeptide: Putative S-adenosyl-L-methionine-dependent methyltransferase MAB_4328c (300 aa).

Residues Asp126 and Asp155–Leu156 contribute to the S-adenosyl-L-methionine site.

This sequence belongs to the UPF0677 family.

In terms of biological role, exhibits S-adenosyl-L-methionine-dependent methyltransferase activity. This chain is Putative S-adenosyl-L-methionine-dependent methyltransferase MAB_4328c, found in Mycobacteroides abscessus (strain ATCC 19977 / DSM 44196 / CCUG 20993 / CIP 104536 / JCM 13569 / NCTC 13031 / TMC 1543 / L948) (Mycobacterium abscessus).